A 339-amino-acid polypeptide reads, in one-letter code: N-acetyl-gamma-glutamyl-phosphate reductase (339 aa).

The active site involves cysteine 145.

Belongs to the NAGSA dehydrogenase family. Type 1 subfamily.

Its subcellular location is the cytoplasm. It catalyses the reaction N-acetyl-L-glutamate 5-semialdehyde + phosphate + NADP(+) = N-acetyl-L-glutamyl 5-phosphate + NADPH + H(+). The protein operates within amino-acid biosynthesis; L-arginine biosynthesis; N(2)-acetyl-L-ornithine from L-glutamate: step 3/4. Functionally, catalyzes the NADPH-dependent reduction of N-acetyl-5-glutamyl phosphate to yield N-acetyl-L-glutamate 5-semialdehyde. In Thermotoga maritima (strain ATCC 43589 / DSM 3109 / JCM 10099 / NBRC 100826 / MSB8), this protein is N-acetyl-gamma-glutamyl-phosphate reductase.